The primary structure comprises 457 residues: Metal tolerance protein C4 (457 aa).

The Cytoplasmic segment spans residues 1–115 (MQSSHRILSR…IEINDQHSQR (115 aa)). A helical membrane pass occupies residues 116–136 (AVTTALWCNFLVFSLKFGVWW). The Vacuolar portion of the chain corresponds to 137-141 (TSSSH). The chain crosses the membrane as a helical span at residues 142–162 (VIMAEVVHSVADFANQALLAY). At 163 to 183 (GLSSSRRAPDALHPYGYSKER) the chain is on the cytoplasmic side. The chain crosses the membrane as a helical span at residues 184-204 (FVWSLISAVGIFCLGSGATIV). Residues 205-220 (NGVQNLWTSSPPPNME) lie on the Vacuolar side of the membrane. Residues 221-241 (LAAVVIGGSFLIEGASLLVAI) traverse the membrane as a helical segment. Topologically, residues 242-267 (QSVKKGAAQEGMTIRDYIWRGHDPTS) are cytoplasmic. The chain crosses the membrane as a helical span at residues 268 to 288 (VAVMTEDGAAVAGLAIAAASL). Over 289 to 297 (VAVRMTGNP) the chain is Vacuolar. The chain crosses the membrane as a helical span at residues 298–318 (IYDPIGSIVVGNLLGMVAIFL). Topologically, residues 319-457 (IQRNRHALIG…HNPTPTDPSL (139 aa)) are cytoplasmic.

This sequence belongs to the cation diffusion facilitator (CDF) transporter (TC 2.A.4) family.

It is found in the vacuole membrane. Involved in sequestration of excess metal in the cytoplasm into vacuoles to maintain metal homeostasis. The polypeptide is Metal tolerance protein C4 (MTPC4) (Arabidopsis thaliana (Mouse-ear cress)).